A 123-amino-acid polypeptide reads, in one-letter code: Antitoxin RnlB (123 aa).

As to quaternary structure, can form a complex with cognate toxin RnlA. In terms of processing, probably degraded by CplXP and Lon proteases.

In terms of biological role, antitoxin component of a type II toxin-antitoxin (TA) system. A labile antitoxin (half-life of 2.1 minutes) that inhibits the endonuclease activity of cognate toxin RnlA but not that of non-cognate toxin LsoA. This chain is Antitoxin RnlB (rnlB), found in Escherichia coli (strain K12).